The primary structure comprises 264 residues: ATP synthase subunit a (264 aa).

6 consecutive transmembrane segments (helical) span residues 29-49, 89-109, 134-154, 177-197, 208-228, and 235-255; these read TWHI…LWLF, VIAP…FMDM, DLNI…YYSI, IPVN…SLAL, LIFI…TLGV, and LIFH…LTIV.

This sequence belongs to the ATPase A chain family. As to quaternary structure, F-type ATPases have 2 components, CF(1) - the catalytic core - and CF(0) - the membrane proton channel. CF(1) has five subunits: alpha(3), beta(3), gamma(1), delta(1), epsilon(1). CF(0) has three main subunits: a(1), b(2) and c(9-12). The alpha and beta chains form an alternating ring which encloses part of the gamma chain. CF(1) is attached to CF(0) by a central stalk formed by the gamma and epsilon chains, while a peripheral stalk is formed by the delta and b chains.

The protein localises to the cell inner membrane. Functionally, key component of the proton channel; it plays a direct role in the translocation of protons across the membrane. The protein is ATP synthase subunit a of Shewanella woodyi (strain ATCC 51908 / MS32).